We begin with the raw amino-acid sequence, 310 residues long: ADP-L-glycero-D-manno-heptose-6-epimerase (310 aa).

Residues phenylalanine 10 to isoleucine 11, aspartate 31 to asparagine 32, lysine 38, lysine 53, glutamate 75 to serine 79, and asparagine 92 contribute to the NADP(+) site. The active-site Proton acceptor is tyrosine 140. Position 144 (lysine 144) interacts with NADP(+). Residue asparagine 169 participates in substrate binding. Residues valine 170 and lysine 178 each contribute to the NADP(+) site. Lysine 178 serves as the catalytic Proton acceptor. Residues serine 180, histidine 187, phenylalanine 201–serine 204, arginine 209, and tyrosine 272 contribute to the substrate site.

It belongs to the NAD(P)-dependent epimerase/dehydratase family. HldD subfamily. In terms of assembly, homopentamer. NADP(+) serves as cofactor.

It carries out the reaction ADP-D-glycero-beta-D-manno-heptose = ADP-L-glycero-beta-D-manno-heptose. The protein operates within nucleotide-sugar biosynthesis; ADP-L-glycero-beta-D-manno-heptose biosynthesis; ADP-L-glycero-beta-D-manno-heptose from D-glycero-beta-D-manno-heptose 7-phosphate: step 4/4. In terms of biological role, catalyzes the interconversion between ADP-D-glycero-beta-D-manno-heptose and ADP-L-glycero-beta-D-manno-heptose via an epimerization at carbon 6 of the heptose. The protein is ADP-L-glycero-D-manno-heptose-6-epimerase of Klebsiella pneumoniae subsp. pneumoniae (strain ATCC 700721 / MGH 78578).